Here is a 459-residue protein sequence, read N- to C-terminus: Sulfite oxidase (459 aa).

Residues 4-83 (YPRYTREEVG…LQQYKVGELS (80 aa)) enclose the Cytochrome b5 heme-binding domain. Positions 40, 65, and 69 each coordinate heme b. Positions 83–115 (SPDEAPAAPDAQDPFAGDPPRHPGLRVNSQKPF) are disordered. A compositionally biased stretch (low complexity) spans 85-100 (DEAPAAPDAQDPFAGD). Positions 86–95 (EAPAAPDAQD) are hinge. Residues 96-323 (PFAGDPPRHP…PSRWQQNDYK (228 aa)) are moco domain. Mo-molybdopterin-binding positions include 136–140 (FTRNH), Cys185, Asp244, His283, Arg288, and 299–301 (SVK). Residues 324–459 (GFSPCVDWDT…RGVLSTAWHR (136 aa)) form a homodimerization region.

As to quaternary structure, homodimer. Heme b serves as cofactor. Requires Mo-molybdopterin as cofactor.

The protein localises to the mitochondrion intermembrane space. It carries out the reaction sulfite + O2 + H2O = sulfate + H2O2. Its pathway is energy metabolism; sulfur metabolism. Functionally, catalyzes the oxidation of sulfite to sulfate, the terminal reaction in the oxidative degradation of sulfur-containing amino acids. The protein is Sulfite oxidase (SUOX) of Gallus gallus (Chicken).